A 508-amino-acid chain; its full sequence is Metalloprotease TIKI1 (508 aa).

Residues 1 to 23 (MVIIWNIFLPAFLLVLAKASLRS) form the signal peptide. The Extracellular portion of the chain corresponds to 24–485 (SRDSANCKLN…KYIKAAQSVS (462 aa)). N219, N228, N277, and N335 each carry an N-linked (GlcNAc...) asparagine glycan. A helical membrane pass occupies residues 486–506 (FSLSIPSAFLLLAWCFQQVAV). Residues 507 to 508 (LQ) lie on the Cytoplasmic side of the membrane.

This sequence belongs to the TIKI family. It depends on Mn(2+) as a cofactor. Co(2+) is required as a cofactor. In terms of tissue distribution, zygotically expressed in the Spemann-Mangold organizer, in particular in the head Spemann-Mangold organizer region responsible for anterior patterning.

It is found in the cell membrane. Metalloprotease that acts as a negative regulator of the Wnt signaling pathway: expressed in the Spemann-Mangold organizer and is required for anterior-neural patterning in head formation in embryos. Acts by mediating the cleavage of the N-terminal residues of a subset of Wnt proteins. Following cleavage, Wnt proteins become oxidized and form large disulfide-bond oligomers, leading to their inactivation. Able to cleave wnt8. This is Metalloprotease TIKI1 (trabd2a) from Xenopus tropicalis (Western clawed frog).